Reading from the N-terminus, the 198-residue chain is Pyridoxine/pyridoxamine 5'-phosphate oxidase (198 aa).

Residues 47 to 52 (RMVLVK), 62 to 63 (FT), R68, K69, and Q91 each bind FMN. A substrate-binding site is contributed by K52. Substrate-binding residues include Y109, R113, and S117. FMN is bound by residues 126–127 (QS) and W171. 177-179 (RLH) is a substrate binding site. R181 serves as a coordination point for FMN.

This sequence belongs to the pyridoxamine 5'-phosphate oxidase family. In terms of assembly, homodimer. FMN is required as a cofactor.

It catalyses the reaction pyridoxamine 5'-phosphate + O2 + H2O = pyridoxal 5'-phosphate + H2O2 + NH4(+). It carries out the reaction pyridoxine 5'-phosphate + O2 = pyridoxal 5'-phosphate + H2O2. It functions in the pathway cofactor metabolism; pyridoxal 5'-phosphate salvage; pyridoxal 5'-phosphate from pyridoxamine 5'-phosphate: step 1/1. It participates in cofactor metabolism; pyridoxal 5'-phosphate salvage; pyridoxal 5'-phosphate from pyridoxine 5'-phosphate: step 1/1. Its function is as follows. Catalyzes the oxidation of either pyridoxine 5'-phosphate (PNP) or pyridoxamine 5'-phosphate (PMP) into pyridoxal 5'-phosphate (PLP). In Anaeromyxobacter dehalogenans (strain 2CP-C), this protein is Pyridoxine/pyridoxamine 5'-phosphate oxidase.